The chain runs to 340 residues: Coproporphyrin III ferrochelatase (340 aa).

Residues Ser52 and Tyr116 each coordinate Fe-coproporphyrin III. The Fe(2+) site is built by His172 and Glu255.

The protein belongs to the ferrochelatase family.

The protein localises to the cytoplasm. The enzyme catalyses Fe-coproporphyrin III + 2 H(+) = coproporphyrin III + Fe(2+). The protein operates within porphyrin-containing compound metabolism; protoheme biosynthesis. In terms of biological role, involved in coproporphyrin-dependent heme b biosynthesis. Catalyzes the insertion of ferrous iron into coproporphyrin III to form Fe-coproporphyrin III. In Mycobacterium ulcerans (strain Agy99), this protein is Coproporphyrin III ferrochelatase.